The following is a 22-amino-acid chain: Unknown endosperm protein L (22 aa).

Over residues 1 to 11 (MRHSNKIRDEE) the composition is skewed to basic and acidic residues. The segment at 1-22 (MRHSNKIRDEEMVNNTRLNXXA) is disordered. Residues 13-22 (VNNTRLNXXA) are compositionally biased toward polar residues.

Post-translationally, the N-terminus is blocked.

This is Unknown endosperm protein L from Hordeum vulgare (Barley).